The chain runs to 114 residues: Large ribosomal subunit protein uL22 (114 aa).

Belongs to the universal ribosomal protein uL22 family. As to quaternary structure, part of the 50S ribosomal subunit.

This protein binds specifically to 23S rRNA; its binding is stimulated by other ribosomal proteins, e.g. L4, L17, and L20. It is important during the early stages of 50S assembly. It makes multiple contacts with different domains of the 23S rRNA in the assembled 50S subunit and ribosome. In terms of biological role, the globular domain of the protein is located near the polypeptide exit tunnel on the outside of the subunit, while an extended beta-hairpin is found that lines the wall of the exit tunnel in the center of the 70S ribosome. In Streptococcus pyogenes serotype M5 (strain Manfredo), this protein is Large ribosomal subunit protein uL22.